A 224-amino-acid polypeptide reads, in one-letter code: LOB domain-containing protein 15 (224 aa).

An LOB domain is found at 44 to 145 (TPCAACKLLR…AELTAVRSEI (102 aa)). The disordered stretch occupies residues 171–224 (SGGVSVIAPPPQRPTTPPQPTTAHPPSPSSCVFSQPTTRDLEYGNIESENNYFG). Pro residues predominate over residues 178–198 (APPPQRPTTPPQPTTAHPPSP).

Belongs to the LOB domain-containing protein family. Expressed in young shoots, roots, stems, leaves and flowers.

This Arabidopsis thaliana (Mouse-ear cress) protein is LOB domain-containing protein 15 (LBD15).